The following is a 117-amino-acid chain: Large ribosomal subunit protein eL34 (117 aa).

It belongs to the eukaryotic ribosomal protein eL34 family. As to quaternary structure, component of the large ribosomal subunit.

It is found in the cytoplasm. The protein localises to the cytosol. Its subcellular location is the endoplasmic reticulum. In terms of biological role, component of the large ribosomal subunit. The ribosome is a large ribonucleoprotein complex responsible for the synthesis of proteins in the cell. The chain is Large ribosomal subunit protein eL34 (rpl34) from Danio rerio (Zebrafish).